A 1497-amino-acid polypeptide reads, in one-letter code: Polyunsaturated fatty acid synthase subunit C (1497 aa).

Dehydratase (DH) domain regions lie at residues 271–422 (YKLC…DYGK) and 797–937 (QGQY…RVRI). Residues 944-958 (ASSSASSVGSSASAE) show a composition bias toward low complexity. The disordered stretch occupies residues 944-977 (ASSSASSVGSSASAEVAERTRSKAAPQPVASGPA). The interval 1026–1470 (LGDLGDRSFM…ILRGACYLRR (445 aa)) is enoylreductase (ER) domain.

It belongs to the thioester dehydratase family. FabA subfamily. As to quaternary structure, component of the polyunsaturated fatty acid synthase complex composed of at least ORF-A, ORF-B and ORF-C.

It functions in the pathway lipid metabolism; fatty acid biosynthesis. Its function is as follows. Polyketide synthase-like protein; part of the polyunsaturated fatty acid synthase composed of the 3 PKS-like subunits A, B and C. While the saturated fatty acids (SFAs) in Thraustochytrium are produced by the conventional fatty acid synthase (FAS) pathway, polyunsaturated fatty acids (PUFAs) including docosahexeanoic acid (DHA) and docosapentaenoic acid (DPA) are synthesized via an anaerobical PKS pathway. PUFA synthase assimilates fatty acyl-CoA, the product of FAS, as the starter unit to synthesize DPA, and this starter unit may be butyryl-CoA, hexanoyl-CoA, or octanoyl-CoA. DPA and DHA biosynthesis seem to differ by the reduction at the N-3 position by PUFA synthase, not the extension of carbon chain. In DHA biosynthesis, PUFA synthase extends the fatty acyl chain from the methyl toward the carboxyl end, and the double bond is formed when the carbon chain is growing, instead of afterward. Therefore, PUFA synthase is unable to transform DPA to DHA, suggesting that DPA is not the precursor of DHA. Moreover, DPA molecule is partly extended by FAS KS domain, so DPA biosynthesis is less dependent on PUFA synthase KS domain than DHA. The sequence is that of Polyunsaturated fatty acid synthase subunit C from Thraustochytrium sp. (strain ATCC 26185 / S-3).